Consider the following 122-residue polypeptide: Probable glycine cleavage system H protein (122 aa).

Residues 23–104 (IATVGITDYA…PYGNWLVKMK (82 aa)) enclose the Lipoyl-binding domain. Lys-64 carries the N6-lipoyllysine modification.

The protein belongs to the GcvH family. In terms of assembly, the glycine cleavage system is composed of four proteins: P, T, L and H. It depends on (R)-lipoate as a cofactor.

Its function is as follows. The glycine cleavage system catalyzes the degradation of glycine. The H protein shuttles the methylamine group of glycine from the P protein to the T protein. In Thermoplasma volcanium (strain ATCC 51530 / DSM 4299 / JCM 9571 / NBRC 15438 / GSS1), this protein is Probable glycine cleavage system H protein.